A 943-amino-acid polypeptide reads, in one-letter code: Translation initiation factor IF-2 (943 aa).

Residues 29–357 (LSVKSHSSSV…KPVTERKFHE (329 aa)) form a disordered region. Composition is skewed to basic and acidic residues over residues 69-82 (PKEE…DKAS), 112-137 (FKAE…DNRN), 145-155 (QGKRHNNDRRN), 163-196 (DHNK…RDNA), and 224-253 (RQSE…EKQQ). The segment covering 254 to 266 (AEVAVQKAAAETK) has biased composition (low complexity). Positions 296–309 (KSRDNRRVNEDGPK) are enriched in basic and acidic residues. Positions 313–332 (NNKWNNQNQVRNQRNSNWNK) are enriched in low complexity. One can recognise a tr-type G domain in the interval 445 to 614 (ERAPVVTIMG…LLVAEVEELK (170 aa)). Positions 454-461 (GHVDHGKT) are G1. 454–461 (GHVDHGKT) contacts GTP. The segment at 479–483 (GITQH) is G2. The interval 500–503 (DTPG) is G3. Residues 500–504 (DTPGH) and 554–557 (NKID) contribute to the GTP site. Residues 554–557 (NKID) form a G4 region. Residues 590 to 592 (SAK) are G5.

Belongs to the TRAFAC class translation factor GTPase superfamily. Classic translation factor GTPase family. IF-2 subfamily.

It localises to the cytoplasm. In terms of biological role, one of the essential components for the initiation of protein synthesis. Protects formylmethionyl-tRNA from spontaneous hydrolysis and promotes its binding to the 30S ribosomal subunits. Also involved in the hydrolysis of GTP during the formation of the 70S ribosomal complex. This Streptococcus thermophilus (strain CNRZ 1066) protein is Translation initiation factor IF-2.